We begin with the raw amino-acid sequence, 233 residues long: Small ribosomal subunit protein uS2 (233 aa).

Belongs to the universal ribosomal protein uS2 family.

This chain is Small ribosomal subunit protein uS2, found in Clostridium botulinum (strain Eklund 17B / Type B).